A 329-amino-acid polypeptide reads, in one-letter code: Dapdiamide synthesis protein DdaC (329 aa).

It depends on Fe(2+) as a cofactor.

Its pathway is antibiotic biosynthesis. In terms of biological role, involved in dapdiamide antibiotics biosynthesis. Catalyzes the alpha-ketoglutarate-dependent epoxidation of the covalently bound N-beta-fumaramoyl-DAP-S-DdaD to generate N-beta-epoxysuccinamoyl-DAP in thioester linkage to DdaD. This is Dapdiamide synthesis protein DdaC from Enterobacter agglomerans (Erwinia herbicola).